We begin with the raw amino-acid sequence, 463 residues long: Glutamyl-tRNA reductase (463 aa).

Substrate contacts are provided by residues T49 to R52, S109, E114 to Q116, and Q120. The Nucleophile role is filled by C50. G196–S201 serves as a coordination point for NADP(+).

Belongs to the glutamyl-tRNA reductase family. As to quaternary structure, homodimer.

It catalyses the reaction (S)-4-amino-5-oxopentanoate + tRNA(Glu) + NADP(+) = L-glutamyl-tRNA(Glu) + NADPH + H(+). It functions in the pathway porphyrin-containing compound metabolism; protoporphyrin-IX biosynthesis; 5-aminolevulinate from L-glutamyl-tRNA(Glu): step 1/2. In terms of biological role, catalyzes the NADPH-dependent reduction of glutamyl-tRNA(Glu) to glutamate 1-semialdehyde (GSA). This chain is Glutamyl-tRNA reductase, found in Corynebacterium glutamicum (strain ATCC 13032 / DSM 20300 / JCM 1318 / BCRC 11384 / CCUG 27702 / LMG 3730 / NBRC 12168 / NCIMB 10025 / NRRL B-2784 / 534).